The primary structure comprises 155 residues: Small ribosomal subunit protein uS7cz/uS7cy (155 aa).

Belongs to the universal ribosomal protein uS7 family. Part of the 30S ribosomal subunit.

The protein localises to the plastid. It localises to the chloroplast. In terms of biological role, one of the primary rRNA binding proteins, it binds directly to 16S rRNA where it nucleates assembly of the head domain of the 30S subunit. The polypeptide is Small ribosomal subunit protein uS7cz/uS7cy (rps7-A) (Anthoceros angustus (Hornwort)).